Here is a 216-residue protein sequence, read N- to C-terminus: Probable nicotinate-nucleotide adenylyltransferase (216 aa).

This sequence belongs to the NadD family.

It catalyses the reaction nicotinate beta-D-ribonucleotide + ATP + H(+) = deamido-NAD(+) + diphosphate. Its pathway is cofactor biosynthesis; NAD(+) biosynthesis; deamido-NAD(+) from nicotinate D-ribonucleotide: step 1/1. Its function is as follows. Catalyzes the reversible adenylation of nicotinate mononucleotide (NaMN) to nicotinic acid adenine dinucleotide (NaAD). This Klebsiella pneumoniae subsp. pneumoniae (strain ATCC 700721 / MGH 78578) protein is Probable nicotinate-nucleotide adenylyltransferase.